We begin with the raw amino-acid sequence, 706 residues long: Protein argonaute (706 aa).

An N-terminal domain region spans residues Met-1–Thr-108. Residues Lys-109–Pro-165 are linker L1. The PAZ domain maps to Thr-168–Leu-259. The segment at Asn-263–Thr-334 is linker L2. The mid domain stretch occupies residues Asn-335–Lys-448. Residues Leu-419–Glu-694 form the Piwi domain. The segment at Lys-449 to Leu-706 is PIWI domain. Catalysis depends on residues Asp-502, Glu-541, and Asp-571. Asp-502 serves as a coordination point for Mn(2+). Residue Asp-571 participates in Mn(2+) binding. A PIWI box region spans residues Phe-612–Leu-650. The active site involves Asp-683. Asp-683 is a Mn(2+) binding site.

Belongs to the argonaute family. Long pAgo subfamily. Requires Mg(2+) as cofactor.

Its function is as follows. A DNA-guided RNA endonuclease. Uses short ssDNA sequences as guides (gDNA) to bind complementary target strands, resulting in cleavage of the target RNA. The cleavage site is 10 nucleotides downstream of the residue base paired with the 5'-end of the gDNA. Binds ssDNA better than ssRNA, binds dsDNA and DNA-RNA hybrids but does not bind dsRNA. A 2 nucleotide 3'-overhang (possibly on the guide strand) may help load nucleic acids into the complex. The protein is Protein argonaute of Aquifex aeolicus (strain VF5).